The chain runs to 425 residues: MEVKELERDKNRVVLEYVFGAEEIAQAEDKAVRYLNQRVEIPGFRKGRIPKNVLKMKLGEEFQEYTLDFLMDLIPDTLKDRKLILSPIVTERELKDVTARVVVEVHEEPEVRIGDISKIEVEKVDEEKVLEKYVERRIEDLRESHALLEPKEGPAEAGDLVRVNMEVYNEEEKKLTSREYEYVISEDEDRPFVKDLVGKKKGDVVEIEREYEGKKYTYKLEVEEVYKRTLPEIGDELAKSVNNEFETLEQLKESLKKEGKEIYDVEMKESMREQLLEKLPEIVEIEISDRTLEILVNEAINRLKREGRYEQIVSSYESEEKFREELKERILDDIKRDRVIEVLAQEKGISVNDEELEKEAEELAPFWGISPDRAKSLVKARQDLREELRWAILKRKVLDLLLQEVKVKVVEPKGEGDDSEGKEDN.

Positions 158–231 (GDLVRVNMEV…VEEVYKRTLP (74 aa)) constitute a PPIase FKBP-type domain.

It belongs to the FKBP-type PPIase family. Tig subfamily.

It localises to the cytoplasm. The catalysed reaction is [protein]-peptidylproline (omega=180) = [protein]-peptidylproline (omega=0). In terms of biological role, involved in protein export. Acts as a chaperone by maintaining the newly synthesized protein in an open conformation. Functions as a peptidyl-prolyl cis-trans isomerase. The polypeptide is Trigger factor (Thermotoga petrophila (strain ATCC BAA-488 / DSM 13995 / JCM 10881 / RKU-1)).